The chain runs to 1031 residues: Error-prone DNA polymerase (1031 aa).

It belongs to the DNA polymerase type-C family. DnaE2 subfamily.

It localises to the cytoplasm. The catalysed reaction is DNA(n) + a 2'-deoxyribonucleoside 5'-triphosphate = DNA(n+1) + diphosphate. Functionally, DNA polymerase involved in damage-induced mutagenesis and translesion synthesis (TLS). It is not the major replicative DNA polymerase. The sequence is that of Error-prone DNA polymerase from Pseudomonas savastanoi pv. phaseolicola (strain 1448A / Race 6) (Pseudomonas syringae pv. phaseolicola (strain 1448A / Race 6)).